Consider the following 256-residue polypeptide: Hydroxyethylthiazole kinase (256 aa).

Substrate is bound at residue M37. ATP-binding residues include K113 and T159. G186 provides a ligand contact to substrate.

It belongs to the Thz kinase family. It depends on Mg(2+) as a cofactor.

The catalysed reaction is 5-(2-hydroxyethyl)-4-methylthiazole + ATP = 4-methyl-5-(2-phosphooxyethyl)-thiazole + ADP + H(+). It participates in cofactor biosynthesis; thiamine diphosphate biosynthesis; 4-methyl-5-(2-phosphoethyl)-thiazole from 5-(2-hydroxyethyl)-4-methylthiazole: step 1/1. In terms of biological role, catalyzes the phosphorylation of the hydroxyl group of 4-methyl-5-beta-hydroxyethylthiazole (THZ). The sequence is that of Hydroxyethylthiazole kinase from Exiguobacterium sibiricum (strain DSM 17290 / CCUG 55495 / CIP 109462 / JCM 13490 / 255-15).